We begin with the raw amino-acid sequence, 995 residues long: Endosome/lysosome-associated apoptosis and autophagy regulator family member 2 (995 aa).

Residues 1–21 (MGVFCWSGCLVISLQLLLGAA) form the signal peptide. Over 22–895 (LDNLSTCKEE…ACESIDFWLK (874 aa)) the chain is Extracellular. N-linked (GlcNAc...) asparagine glycans are attached at residues asparagine 24, asparagine 136, asparagine 245, asparagine 372, asparagine 527, asparagine 649, asparagine 683, asparagine 700, and asparagine 758. Residues 639–843 (SECLVTYTNE…LWETAEACPL (205 aa)) form the MRH domain. Disulfide bonds link cysteine 641–cysteine 687 and cysteine 697–cysteine 725. Intrachain disulfides connect cysteine 793-cysteine 829 and cysteine 805-cysteine 841. A glycan (N-linked (GlcNAc...) asparagine) is linked at asparagine 883. The chain crosses the membrane as a helical span at residues 896-916 (VGAGVGAFTAVLLIALTCYFW). Topologically, residues 917-995 (KKNQKLEYKY…QLKSSRAQNI (79 aa)) are cytoplasmic.

Belongs to the ELAPOR family. In terms of tissue distribution, expressed in the animal half of the embryo during gastrulation, becoming restricted to the ventral ectoderm at stage 12.5. At the neurula stage, expressed in the anterior ectoderm surrounding the neural plate, and weakly in the epidermis. Expression is especially high in the presumptive hatching gland and cement gland regions. Surprisingly, by the tailbud stage (stage 22), expression is limited to the hatching gland and is not seen in the cement gland. Conversely, in tadpoles expressed broadly in the head, heart and fin. Expression in the head is seen in the primary mouth and in the brain, eyes, otic vesicles and olfactory pits.

The protein resides in the cell membrane. Functionally, functions as a regulator of the BMP signaling pathway and is involved in epidermal differentiation. The polypeptide is Endosome/lysosome-associated apoptosis and autophagy regulator family member 2 (elapor2) (Xenopus laevis (African clawed frog)).